A 1690-amino-acid chain; its full sequence is rRNA biogenesis protein rrp5 (1690 aa).

2 disordered regions span residues Met-1–Ser-42 and Phe-59–Asn-90. The span at Ala-11 to Thr-32 shows a compositional bias: polar residues. The segment covering Lys-72–Ser-83 has biased composition (basic residues). 13 consecutive S1 motif domains span residues Gly-109–Lys-209, Gly-226–Thr-289, Gly-306–Leu-376, Gly-398–Gln-473, Gly-490–Lys-559, Gly-579–Arg-648, Gly-666–Lys-739, Gly-761–Lys-830, Gly-866–Arg-942, Gly-973–Leu-1044, Gly-1053–Arg-1122, Gly-1147–Lys-1216, and Gly-1236–Lys-1307. The tract at residues Ser-1313–Ser-1424 is disordered. Acidic residues-rich tracts occupy residues Gln-1348–Pro-1367, Asp-1390–Glu-1400, and Phe-1412–Glu-1421. Thr-1391 carries the phosphothreonine modification. Ser-1394 bears the Phosphoserine mark. HAT repeat units lie at residues Asp-1420 to Asn-1452, Gly-1526 to Asn-1558, and Gly-1596 to Lys-1628. Phosphoserine occurs at positions 1684 and 1686.

In terms of assembly, component of the ribosomal small subunit (SSU) processome.

The protein resides in the nucleus. It is found in the nucleolus. Functionally, involved in the biogenesis of rRNA. Required for the formation of 18S and 5.8S rRNA. The sequence is that of rRNA biogenesis protein rrp5 from Schizosaccharomyces pombe (strain 972 / ATCC 24843) (Fission yeast).